The following is a 201-amino-acid chain: UPF0301 protein Avi_1069 (201 aa).

It belongs to the UPF0301 (AlgH) family.

The chain is UPF0301 protein Avi_1069 from Allorhizobium ampelinum (strain ATCC BAA-846 / DSM 112012 / S4) (Agrobacterium vitis (strain S4)).